The sequence spans 352 residues: C-C chemokine receptor type 5 (352 aa).

Residues 1–30 (MDYQVSSPTYDIDYYTSEPCQKINVKQIAA) are Extracellular-facing. Y3 bears the Sulfotyrosine mark. S6 and S7 each carry an O-linked (GalNAc...) serine glycan. Sulfotyrosine is present on residues Y10, Y14, and Y15. Intrachain disulfides connect C20/C269 and C101/C178. The helical transmembrane segment at 31-58 (RLLPPLYSLVFIFGFVGNILVVLILINC) threads the bilayer. The Cytoplasmic segment spans residues 59-68 (KRLKSMTDIY). A helical transmembrane segment spans residues 69–89 (LLNLAISDLLFLLTVPFWAHY). Topologically, residues 90 to 102 (AAAQWNFGNTMCQ) are extracellular. The chain crosses the membrane as a helical span at residues 103–124 (LLTGLYFIGFFSGIFFIILLTI). The Cytoplasmic segment spans residues 125–141 (DRYLAIVHAVFALKART). The chain crosses the membrane as a helical span at residues 142-166 (VTFGVVTSVITWVVAVFASLPGIIF). The Extracellular portion of the chain corresponds to 167-198 (TRYQREGLHYTCSSHFPYSQYQFWKNFQTLKI). The chain crosses the membrane as a helical span at residues 199–218 (VILGLVLPLLVMVICYSGIL). The Cytoplasmic segment spans residues 219-235 (KTLLRCRNEKKRHRAVR). A helical membrane pass occupies residues 236–260 (LIFTIMIVYFLFWAPYNIVLLLNTF). Residues 261–277 (QEFFGLNNCSSSNRLDQ) are Extracellular-facing. Residues 278–301 (AMQVTETLGMTHCCINPIIYAFVG) traverse the membrane as a helical segment. Over 302–352 (EKFRNYLLVFFQKHIAKRFCKCCSIFQQEAPERASSVYTRSTGEQETSVGL) the chain is Cytoplasmic. 3 S-palmitoyl cysteine lipidation sites follow: C321, C323, and C324. Residues S336, S337, S342, and S349 each carry the phosphoserine; by BARK1 modification.

It belongs to the G-protein coupled receptor 1 family. In terms of assembly, interacts with PRAF2. Efficient ligand binding to CCL3/MIP-1alpha and CCL4/MIP-1beta requires sulfation, O-glycosylation and sialic acid modifications. Glycosylation on Ser-6 is required for efficient binding of CCL4. Interacts with GRK2. Interacts with ARRB1 and ARRB2. Interacts with CNIH4. Interacts with S100A4; this interaction stimulates T-lymphocyte chemotaxis. Sulfated on at least 2 of the N-terminal tyrosines. Sulfation is required for efficient binding of the chemokines, CCL3 and CCL4. In terms of processing, palmitoylation in the C-terminal is important for cell surface expression. Post-translationally, phosphorylation on serine residues in the C-terminal is stimulated by binding CC chemokines especially by APO-RANTES. O-glycosylated, but not N-glycosylated. Ser-6 appears to be the major site even if Ser-7 may be also O-glycosylated. Also sialylated glycans present which contribute to chemokine binding. Thr-16 and Ser-17 may also be glycosylated and, if so, with small moieties such as a T-antigen.

The protein resides in the cell membrane. In terms of biological role, receptor for a number of inflammatory CC-chemokines including CCL3/MIP-1-alpha, CCL4/MIP-1-beta and RANTES and subsequently transduces a signal by increasing the intracellular calcium ion level. May play a role in the control of granulocytic lineage proliferation or differentiation. Participates in T-lymphocyte migration to the infection site by acting as a chemotactic receptor. The sequence is that of C-C chemokine receptor type 5 (CCR5) from Erythrocebus patas (Red guenon).